Reading from the N-terminus, the 574-residue chain is Acyloxyacyl hydrolase (574 aa).

The signal sequence occupies residues 1-22 (MKFPWKVFKTTLLLLLLSHSLA). A propeptide spanning residues 23 to 33 (SVPSEDQPGDS) is cleaved from the precursor. The region spanning 36–117 (HGQSCLGCVV…YALEFCKRGA (82 aa)) is the Saposin B-type domain. The tract at residues 37–69 (GQSCLGCVVLVSVIEQLAEVHNSSVQVAMERLC) is important for enzyme activity, localization to cytoplasmic vesicles, and protein stability. 8 disulfide bridges follow: cysteine 40–cysteine 113, cysteine 43–cysteine 107, cysteine 69–cysteine 82, cysteine 122–cysteine 452, cysteine 159–cysteine 168, cysteine 205–cysteine 229, cysteine 248–cysteine 328, and cysteine 375–cysteine 458. The N-linked (GlcNAc...) asparagine glycan is linked to asparagine 58. The segment at 172–176 (ELSIK) is lipopolysaccharide binding. Ca(2+) contacts are provided by aspartate 183, aspartate 185, aspartate 187, histidine 189, aspartate 204, asparagine 206, aspartate 207, aspartate 209, valine 212, aspartate 222, aspartate 226, asparagine 228, asparagine 230, isoleucine 232, and glutamate 244. N-linked (GlcNAc...) asparagine glycosylation is present at asparagine 206. The active site involves serine 262. N-linked (GlcNAc...) asparagine glycosylation is found at asparagine 408 and asparagine 465.

In terms of assembly, heterodimer of the large and small subunits; disulfide-linked. Ca(2+) serves as cofactor. Post-translationally, cleaved into a large and a small subunit. In terms of processing, the small subunit is N-glycosylated. In terms of tissue distribution, detected in peritoneal macrophages (at protein level). Strongly expressed in kidney cortex, where it may be produced by proximal tubule cells. In liver, expressed at high levels in Kupffer cells. Expressed by dendritic cells. Detected at low levels in alveolar macrophages.

It is found in the secreted. The protein resides in the cytoplasmic vesicle. The enzyme catalyses a 3-(acyloxy)acyl derivative of bacterial toxin + H2O = a 3-hydroxyacyl derivative of bacterial toxin + a fatty acid + H(+). Its function is as follows. Removes the secondary (acyloxyacyl-linked) fatty acyl chains from the lipid A region of bacterial lipopolysaccharides (LPS). By breaking down LPS, terminates the host response to bacterial infection and prevents prolonged and damaging inflammatory responses. In peritoneal macrophages, seems to be important for recovery from a state of immune tolerance following infection by Gram-negative bacteria. This chain is Acyloxyacyl hydrolase, found in Mus musculus (Mouse).